A 147-amino-acid chain; its full sequence is Plasminogen receptor (KT) (147 aa).

The Extracellular segment spans residues 1–52; it reads MGFIFSKSMNENMKNQQEFMVMHARLQLERQLIMQNEMRERQMAMQIAWSRE. The chain crosses the membrane as a helical span at residues 53 to 73; that stretch reads FLKYFGTFFGIATISLAAGAI. The Cytoplasmic segment spans residues 74–78; that stretch reads KRKKP. The helical transmembrane segment at 79-99 threads the bilayer; that stretch reads AFLIPIVPLSFIFTYQYDLGY. Residues 100 to 147 are Extracellular-facing; sequence GTLLQRMKSEAEDILETEKTKLELPKGLITFESLEKARREQSKFFSDK.

Interacts with PLAT. Interacts with PLAUR. As to expression, expressed in adrenal medulla (pheochromocytoma).

The protein resides in the cell membrane. In terms of biological role, receptor for plasminogen. Regulates urokinase plasminogen activator-dependent and stimulates tissue-type plasminogen activator-dependent cell surface plasminogen activation. Proposed to be part of a local catecholaminergic cell plasminogen activation system that regulates neuroendocrine prohormone processing. Involved in regulation of inflammatory response; regulates monocyte chemotactic migration and matrix metalloproteinase activation, such as of MMP2 and MMP9. The chain is Plasminogen receptor (KT) (Plgrkt) from Rattus norvegicus (Rat).